The primary structure comprises 168 residues: Large ribosomal subunit protein uL10 (168 aa).

It belongs to the universal ribosomal protein uL10 family. Part of the ribosomal stalk of the 50S ribosomal subunit. The N-terminus interacts with L11 and the large rRNA to form the base of the stalk. The C-terminus forms an elongated spine to which L12 dimers bind in a sequential fashion forming a multimeric L10(L12)X complex.

Forms part of the ribosomal stalk, playing a central role in the interaction of the ribosome with GTP-bound translation factors. In Paracidovorax citrulli (strain AAC00-1) (Acidovorax citrulli), this protein is Large ribosomal subunit protein uL10.